We begin with the raw amino-acid sequence, 548 residues long: Chaperonin GroEL (548 aa).

Residues 29-32 (TMGP), Lys50, 86-90 (DGTTT), Gly414, 478-480 (NAA), and Asp494 contribute to the ATP site.

Belongs to the chaperonin (HSP60) family. Forms a cylinder of 14 subunits composed of two heptameric rings stacked back-to-back. Interacts with the co-chaperonin GroES.

It is found in the cytoplasm. It catalyses the reaction ATP + H2O + a folded polypeptide = ADP + phosphate + an unfolded polypeptide.. In terms of biological role, together with its co-chaperonin GroES, plays an essential role in assisting protein folding. The GroEL-GroES system forms a nano-cage that allows encapsulation of the non-native substrate proteins and provides a physical environment optimized to promote and accelerate protein folding. The polypeptide is Chaperonin GroEL (Legionella pneumophila (strain Paris)).